We begin with the raw amino-acid sequence, 249 residues long: Enolase-phosphatase E1 (249 aa).

Mg(2+)-binding residues include Asp-14 and Glu-16. Residues 141–142 (SS) and Lys-175 contribute to the substrate site. Asp-200 contacts Mg(2+).

Belongs to the HAD-like hydrolase superfamily. MasA/MtnC family. In terms of assembly, monomer. Mg(2+) serves as cofactor.

The protein resides in the cytoplasm. It is found in the nucleus. It catalyses the reaction 5-methylsulfanyl-2,3-dioxopentyl phosphate + H2O = 1,2-dihydroxy-5-(methylsulfanyl)pent-1-en-3-one + phosphate. The protein operates within amino-acid biosynthesis; L-methionine biosynthesis via salvage pathway; L-methionine from S-methyl-5-thio-alpha-D-ribose 1-phosphate: step 3/6. Its pathway is amino-acid biosynthesis; L-methionine biosynthesis via salvage pathway; L-methionine from S-methyl-5-thio-alpha-D-ribose 1-phosphate: step 4/6. Its function is as follows. Bifunctional enzyme that catalyzes the enolization of 2,3-diketo-5-methylthiopentyl-1-phosphate (DK-MTP-1-P) into the intermediate 2-hydroxy-3-keto-5-methylthiopentenyl-1-phosphate (HK-MTPenyl-1-P), which is then dephosphorylated to form the acireductone 1,2-dihydroxy-3-keto-5-methylthiopentene (DHK-MTPene). This is Enolase-phosphatase E1 from Drosophila virilis (Fruit fly).